The primary structure comprises 130 residues: kinetoplast-associated protein 2-1 (130 aa).

Positions 1 to 10 are excised as a propeptide; that stretch reads MLRRTVSNFA. Residues 89-130 form a disordered region; sequence LTKKWNETKQAQREKAQKAQKKTKSAKSKVKKAAKKSKKSKK. The span at 92–105 shows a compositional bias: basic and acidic residues; it reads KWNETKQAQREKAQ. Residues 106–130 are compositionally biased toward basic residues; it reads KAQKKTKSAKSKVKKAAKKSKKSKK.

Belongs to the KAP family. As to quaternary structure, associates with the kinetoplast DNA network.

It localises to the mitochondrion matrix. It is found in the kinetoplast. Functionally, histone H1-like DNA-binding protein involved in the organization and segregation of kinetoplast DNA (kDNA). The mitochondrial DNA of kinetoplastid protozoa consists of about 5,000 minicircles and 20 to 30 maxicircles. These circular DNAs are held together by catenation into a highly organized compact disk structure referred to as a kinetoplast DNA (kDNA) network. Binds preferentially to a specific fragment of minicircle DNA and is able to compact kDNA networks through DNA charge neutralization and condensation. The polypeptide is kinetoplast-associated protein 2-1 (KAP2-1) (Crithidia fasciculata).